Here is a 461-residue protein sequence, read N- to C-terminus: Transcription factor GTE3, chloroplastic (461 aa).

Residues 1 to 11 (MASGPIAGGGV) show a composition bias toward gly residues. The tract at residues 1–41 (MASGPIAGGGVSKTKHKWSDSGNKSQKRSKPTVANSNSLGL) is disordered. The N-terminal 51 residues, 1-51 (MASGPIAGGGVSKTKHKWSDSGNKSQKRSKPTVANSNSLGLEDNHQMMKIS), are a transit peptide targeting the chloroplast. One can recognise a Bromo domain in the interval 114–220 (KGTVQILKSC…NLFEEKWVPL (107 aa)). One can recognise an NET domain in the interval 298–379 (LVEEASANRD…EYKESLSKKK (82 aa)). The span at 376 to 392 (SKKKEEQGLDSERDAES) shows a compositional bias: basic and acidic residues. Positions 376 to 461 (SKKKEEQGLD…SSGHESDTGN (86 aa)) are disordered. A compositionally biased stretch (polar residues) spans 393 to 412 (FHNSVHESNTLVTGLESSKV). The segment covering 429-451 (GGSSSSNSSSSGSGSGSSGSDSD) has biased composition (low complexity). Residues 452-461 (SSGHESDTGN) are compositionally biased toward basic and acidic residues.

As to quaternary structure, interacts with SIZ1 (via PHD domain). Post-translationally, sumoylated by SIZ1. Sumoylation reduces capacity to bind to acetylated histone H3.

Its subcellular location is the plastid. The protein resides in the chloroplast. Functionally, probable transcription factor that binds to acetylated histone H3. The protein is Transcription factor GTE3, chloroplastic (GTE3) of Arabidopsis thaliana (Mouse-ear cress).